A 214-amino-acid polypeptide reads, in one-letter code: UPF0056 membrane protein aq_540 (214 aa).

A run of 6 helical transmembrane segments spans residues 17–37 (FLSL…ISLM), 47–67 (VIAL…LISG), 73–93 (FMGI…FLIA), 122–142 (LIPL…VLVL), 153–173 (VALF…YSLS), and 185–205 (INLI…QFVV).

This sequence belongs to the UPF0056 (MarC) family.

The protein resides in the cell membrane. This Aquifex aeolicus (strain VF5) protein is UPF0056 membrane protein aq_540.